A 328-amino-acid chain; its full sequence is MCDALKSIKKIKKEIQRTTTVEELKTLRIKYLGKKGYLASKMQKLFSLSLDKKKIYGSIINKFKSDLNIELDLHKKILDMIAVSSLNKKEKNFDVSLISRKNDIGTIHPITYVISSIENFFLKLGFSVITGFEIDDDYHNFDLLNIPKYHPARADHDTFWFDANRLLRTQTSNMQIRTMKNETPPIKIIVPGKVYRNDYDATHTPMFHQVEGLIVDHDVNFFHLKWIIEMFLKFFFNKTVKIRFKSSYFPFTVLSAEVDILGNNKKWLEVLGCGMIHPKVLSNANINPKMYSGCAFGIGVERITMLRYGISDIRVFYENNLKFLTQFK.

This sequence belongs to the class-II aminoacyl-tRNA synthetase family. Phe-tRNA synthetase alpha subunit type 1 subfamily. As to quaternary structure, tetramer of two alpha and two beta subunits. Mg(2+) is required as a cofactor.

It is found in the cytoplasm. It catalyses the reaction tRNA(Phe) + L-phenylalanine + ATP = L-phenylalanyl-tRNA(Phe) + AMP + diphosphate + H(+). In Buchnera aphidicola subsp. Baizongia pistaciae (strain Bp), this protein is Phenylalanine--tRNA ligase alpha subunit.